A 143-amino-acid chain; its full sequence is Large ribosomal subunit protein uL13 (143 aa).

The protein belongs to the universal ribosomal protein uL13 family. In terms of assembly, part of the 50S ribosomal subunit.

This protein is one of the early assembly proteins of the 50S ribosomal subunit, although it is not seen to bind rRNA by itself. It is important during the early stages of 50S assembly. The chain is Large ribosomal subunit protein uL13 from Thermoanaerobacter pseudethanolicus (strain ATCC 33223 / 39E) (Clostridium thermohydrosulfuricum).